The following is a 21-amino-acid chain: Large ribosomal subunit protein uL10 (21 aa).

The protein belongs to the universal ribosomal protein uL10 family. In terms of assembly, part of the ribosomal stalk of the 50S ribosomal subunit. The N-terminus interacts with L11 and the large rRNA to form the base of the stalk. The C-terminus forms an elongated spine to which L12 dimers bind in a sequential fashion forming a multimeric L10(L12)X complex.

In terms of biological role, forms part of the ribosomal stalk, playing a central role in the interaction of the ribosome with GTP-bound translation factors. The chain is Large ribosomal subunit protein uL10 (rplJ) from Proteus vulgaris.